An 851-amino-acid chain; its full sequence is Alanine--tRNA ligase (851 aa).

Residues histidine 535, histidine 539, cysteine 637, and histidine 641 each coordinate Zn(2+).

It belongs to the class-II aminoacyl-tRNA synthetase family. Requires Zn(2+) as cofactor.

The protein resides in the cytoplasm. The catalysed reaction is tRNA(Ala) + L-alanine + ATP = L-alanyl-tRNA(Ala) + AMP + diphosphate. Catalyzes the attachment of alanine to tRNA(Ala) in a two-step reaction: alanine is first activated by ATP to form Ala-AMP and then transferred to the acceptor end of tRNA(Ala). Also edits incorrectly charged Ser-tRNA(Ala) and Gly-tRNA(Ala) via its editing domain. This chain is Alanine--tRNA ligase, found in Acholeplasma laidlawii (strain PG-8A).